A 135-amino-acid chain; its full sequence is Small ribosomal subunit protein uS9 (135 aa).

The span at 108 to 118 (VGDSRRTEPHK) shows a compositional bias: basic and acidic residues. The segment at 108-135 (VGDSRRTEPHKPNRSTKGPRAKRQKSYR) is disordered. A compositionally biased stretch (basic residues) spans 119–135 (PNRSTKGPRAKRQKSYR).

Belongs to the universal ribosomal protein uS9 family. In terms of assembly, part of the 30S ribosomal subunit.

This is Small ribosomal subunit protein uS9 from Thermococcus kodakarensis (strain ATCC BAA-918 / JCM 12380 / KOD1) (Pyrococcus kodakaraensis (strain KOD1)).